A 218-amino-acid polypeptide reads, in one-letter code: Ras-related protein R-Ras (218 aa).

The tract at residues 1 to 30 is disordered; sequence MSSGAASGTGRGRPRGGGPGPGDPPPSETH. Residues 7–20 show a composition bias toward gly residues; sequence SGTGRGRPRGGGPG. GTP is bound at residue 36–44; the sequence is GGGGVGKSA. An Effector region motif is present at residues 58 to 66; sequence YDPTIEDSY. GTP is bound by residues 83–87, 142–145, and 172–174; these read DTAGQ, NKAD, and SAK. Cysteine 215 carries the cysteine methyl ester modification. Cysteine 215 carries S-geranylgeranyl cysteine lipidation. Residues 216–218 constitute a propeptide, removed in mature form; it reads VLL.

This sequence belongs to the small GTPase superfamily. Ras family. Interacts with PLCE1. Interacts (active GTP-bound form preferentially) with RGS14. Interacts with OSBPL3. Interacts with ZDHHC19. Post-translationally, S-palmitoylated by ZDHHC19, leading to increased association with membranes and with rafts/caveolae as well as enhanced cell viability.

It is found in the cell membrane. The catalysed reaction is GTP + H2O = GDP + phosphate + H(+). Functionally, GTP-binding protein with GTPase activity, likely involved in the regulation of MAPK signaling pathway and thereby controlling multiple cellular processes. Regulates the organization of the actin cytoskeleton. With OSPBL3, modulates integrin beta-1 (ITGB1) activity. The polypeptide is Ras-related protein R-Ras (RRAS) (Homo sapiens (Human)).